The following is a 438-amino-acid chain: V-type ATP synthase beta chain (438 aa).

Belongs to the ATPase alpha/beta chains family.

Functionally, produces ATP from ADP in the presence of a proton gradient across the membrane. The V-type beta chain is a regulatory subunit. The chain is V-type ATP synthase beta chain from Protochlamydia amoebophila (strain UWE25).